We begin with the raw amino-acid sequence, 198 residues long: MNLIPTVIEQTSRGERAYDIYSRLLKDRIIMLGSAIDDNVANSIVSQLLFLDAQDPEKDIFLYINSPGGSISAGMAIYDTMNFVKADVQTIGMGMAASMGSFLLTAGANGKRFALPNAEIMIHQPLGGAQGQATEIEIAARHILKIKERMNTIMAEKTGQPYEVIARDTDRDNFMTAQEAKDYGLIDDIIINKSGLKG.

The Nucleophile role is filled by serine 98. The active site involves histidine 123.

The protein belongs to the peptidase S14 family. In terms of assembly, fourteen ClpP subunits assemble into 2 heptameric rings which stack back to back to give a disk-like structure with a central cavity, resembling the structure of eukaryotic proteasomes.

It localises to the cytoplasm. It carries out the reaction Hydrolysis of proteins to small peptides in the presence of ATP and magnesium. alpha-casein is the usual test substrate. In the absence of ATP, only oligopeptides shorter than five residues are hydrolyzed (such as succinyl-Leu-Tyr-|-NHMec, and Leu-Tyr-Leu-|-Tyr-Trp, in which cleavage of the -Tyr-|-Leu- and -Tyr-|-Trp bonds also occurs).. Cleaves peptides in various proteins in a process that requires ATP hydrolysis. Has a chymotrypsin-like activity. Plays a major role in the degradation of misfolded proteins. This chain is ATP-dependent Clp protease proteolytic subunit, found in Listeria monocytogenes serovar 1/2a (strain ATCC BAA-679 / EGD-e).